The primary structure comprises 353 residues: MFVGSFTDKKPGTGIHVFDFNTKSGEAQLLSEVDSIINSSFLKLSPNGKYLYSVIESQLQTHGKIAAFKIDSNAGDLKLINMQDCGGRNPAHIEIDKSGKFLAVSNYTDPSLSFFEVDETGKIKKIDEFFTFTGSGIVKGNQDTAHIHSSNFSLENDYLFLQDLGSDCIHKFKVNLDANQNMSLQKADAIKVKPGSGPRHFVFHQNGKYGYGINELSGKVSAYALLNGNLKFLADYNAYSKKQDSYRSADIHISPDGKFLYASNRGPNEDSIVIFSINKSNGALKLIGHEPTYGEHPRNFAIDPSGQFLLVANQFSNNIVIFRRDVETGKLQKLPQELVVNGSSSLQMFTYSH.

It belongs to the cycloisomerase 2 family.

It localises to the cytoplasm. It carries out the reaction 6-phospho-D-glucono-1,5-lactone + H2O = 6-phospho-D-gluconate + H(+). It functions in the pathway carbohydrate degradation; pentose phosphate pathway; D-ribulose 5-phosphate from D-glucose 6-phosphate (oxidative stage): step 2/3. Functionally, carboxylic ester hydrolase that may be involved in ulvan degradation. Ulvan is the main polysaccharide component of the Ulvales (green seaweed) cell wall. It is composed of disaccharide building blocks comprising 3-sulfated rhamnose (Rha3S) linked to D-glucuronic acid (GlcA), L-iduronic acid (IduA), or D-xylose (Xyl). Catalyzes the hydrolysis of 6-phosphogluconolactone to 6-phosphogluconate. This Formosa agariphila (strain DSM 15362 / KCTC 12365 / LMG 23005 / KMM 3901 / M-2Alg 35-1) protein is 6-phosphogluconolactonase (pgl).